Consider the following 149-residue polypeptide: MADELTVDIVTPDERSFQGPANGVRAPGIEGSFEVREDHAPMIAAFGIGPLIVKTQAAHEYADMHNDRIIFATSGGFLEVIDNKVTVLAETVEPASEIDVERAESAEERAKRRLEEGVQEEERETHEAARDRARNRLRVAMGKVGTRQS.

2 stretches are compositionally biased toward basic and acidic residues: residues 99-116 and 123-134; these read DVER…RLEE and RETHEAARDRAR. A disordered region spans residues 99–149; it reads DVERAESAEERAKRRLEEGVQEEERETHEAARDRARNRLRVAMGKVGTRQS.

Belongs to the ATPase epsilon chain family. As to quaternary structure, F-type ATPases have 2 components, CF(1) - the catalytic core - and CF(0) - the membrane proton channel. CF(1) has five subunits: alpha(3), beta(3), gamma(1), delta(1), epsilon(1). CF(0) has three main subunits: a, b and c.

It localises to the cell inner membrane. Functionally, produces ATP from ADP in the presence of a proton gradient across the membrane. This Salinibacter ruber (strain DSM 13855 / M31) protein is ATP synthase epsilon chain.